The following is a 322-amino-acid chain: Cytochrome c biogenesis protein CcsA (322 aa).

The next 8 helical transmembrane spans lie at 9-29 (ILTHISFSVVSIVITIHLITL), 44-64 (GMITTFFCITGLLVTRWIFLG), 71-91 (LYESLIFLSWSFSIIHMVPYF), 97-117 (FLSAITAPSTFFTQGFATSGL), 143-163 (MILGYAALLCGSLFSVAFLVI), 225-245 (IISIGFIFLTIGILSGAVWAN), 254-274 (WDPKETWAFITWTIFAIYFHI), and 286-306 (AIVASIGFLLIWICYFGVNLL).

It belongs to the CcmF/CycK/Ccl1/NrfE/CcsA family. May interact with Ccs1.

It localises to the plastid. It is found in the chloroplast thylakoid membrane. Its function is as follows. Required during biogenesis of c-type cytochromes (cytochrome c6 and cytochrome f) at the step of heme attachment. In Manihot esculenta (Cassava), this protein is Cytochrome c biogenesis protein CcsA.